The chain runs to 1091 residues: Methionine S-methyltransferase (1091 aa).

The protein belongs to the class I-like SAM-binding methyltransferase superfamily. Homotetramer.

It localises to the cytoplasm. It catalyses the reaction L-methionine + S-adenosyl-L-methionine = S-methyl-L-methionine + S-adenosyl-L-homocysteine. Functionally, catalyzes the S-methylmethionine (SMM) biosynthesis from adenosyl-L-homocysteine (AdoMet) and methionine. SMM biosynthesis (by MMT1) and degradation (by HMT-1, HMT-2 and HMT-3) constitute the SMM cycle in plants, which is probably required to achieve short term control of AdoMet level. Also able to catalyze the selenium-methylmethionine (SeMM) from AdoMet and selenium-methionine (SeMet). May play a role in phoem sulfur transport; such function is however not essential. The polypeptide is Methionine S-methyltransferase (MMT1) (Zea mays (Maize)).